The primary structure comprises 280 residues: Phosphate import ATP-binding protein PstB (280 aa).

In terms of domain architecture, ABC transporter spans Ile34–Ile275. Gly66–Ser73 is an ATP binding site.

It belongs to the ABC transporter superfamily. Phosphate importer (TC 3.A.1.7) family. The complex is composed of two ATP-binding proteins (PstB), two transmembrane proteins (PstC and PstA) and a solute-binding protein (PstS).

The protein resides in the cell inner membrane. It catalyses the reaction phosphate(out) + ATP + H2O = ADP + 2 phosphate(in) + H(+). Part of the ABC transporter complex PstSACB involved in phosphate import. Responsible for energy coupling to the transport system. The sequence is that of Phosphate import ATP-binding protein PstB from Burkholderia mallei (strain ATCC 23344).